Reading from the N-terminus, the 360-residue chain is POU domain, class 5, transcription factor 1 (360 aa).

Disordered stretches follow at residues 1–52 (MAGH…PGVG) and 88–114 (GGLETSQPEGEAGVGVESNSDGASPEP). A 9aaTAD motif is present at residues 4-12 (HLASDFAFS). Position 111 is a phosphoserine; by MAPK (S111). Residue K123 forms a Glycyl lysine isopeptide (Lys-Gly) (interchain with G-Cter in SUMO) linkage. A POU-specific domain is found at 138–212 (DIKALQKELE…LLQKWVEEAD (75 aa)). Residues R157 and Q164 each contribute to the DNA site. 2 DNA-binding regions span residues 180 to 186 (SQTTICR) and 193 to 196 (SFKN). Positions 230-289 (RKRKRTSIENRVRGNLENLFLQCPKPTLQQISHIAQQLGLEKDVVRVWFCNRRQKGKRSS) form a DNA-binding region, homeobox. T235 carries the phosphothreonine modification. Residues S236, S289, S290, and S355 each carry the phosphoserine modification.

The protein belongs to the POU transcription factor family. Class-5 subfamily. Interacts with PKM. Interacts with WWP2. Interacts with UBE2I and ZSCAN10. Interacts with PCGF1. Interacts with ESRRB; recruits ESRRB near the POU5F1-SOX2 element in the NANOG proximal promoter; the interaction is DNA independent. Interacts with ZNF322. Interacts with MAPK8 and MAPK9; the interaction allows MAPK8 and MAPK9 to phosphorylate POU5F1 on Ser-355. Interacts (when phosphorylated on Ser-355) with FBXW8. Interacts with FBXW4. Interacts with SOX2 and SOX15; binds synergistically with either SOX2 or SOX15 to DNA. Interacts with DDX56. Post-translationally, sumoylation enhances the protein stability, DNA binding and transactivation activity. Sumoylation is required for enhanced YES1 expression. Ubiquitinated; undergoes 'Lys-63'-linked polyubiquitination by WWP2 leading to proteasomal degradation. In terms of processing, ERK1/2-mediated phosphorylation at Ser-111 promotes nuclear exclusion and proteasomal degradation. Phosphorylation at Thr-235 and Ser-236 decrease DNA-binding and alters ability to activate transcription. Expressed in developing brain. Highest levels found in specific cell layers of the cortex, the olfactory bulb, the hippocampus and the cerebellum. Low levels of expression in adult tissues.

The protein resides in the cytoplasm. The protein localises to the nucleus. In terms of biological role, transcription factor that binds to the octamer motif (5'-ATTTGCAT-3'). Forms a trimeric complex with SOX2 or SOX15 on DNA and controls the expression of a number of genes involved in embryonic development such as YES1, FGF4, UTF1 and ZFP206. Critical for early embryogenesis and for embryonic stem cell pluripotency. The chain is POU domain, class 5, transcription factor 1 (POU5F1) from Homo sapiens (Human).